The following is a 734-amino-acid chain: Photosystem I P700 chlorophyll a apoprotein A2 (734 aa).

8 consecutive transmembrane segments (helical) span residues 46 to 69, 135 to 158, 175 to 199, 273 to 291, 330 to 353, 369 to 395, 417 to 439, and 517 to 535; these read IFASHFGQLAIIFLWTSGNLFHVA, LYTGALFLLFLSAISLIAGWLHLQ, LNHHLSGLFGVSSLAWTGHLVHVAI, MAHHHLAIAFIFLVAGHMY, LHFQLGLALASLGVITSLVAQHMY, AALYTHHQYIAGFIMTGAFAHGAIFFI, AIISHLSWASLFLGFHTLGLYVH, and FLVHHAIALGLHTTTLILV. [4Fe-4S] cluster contacts are provided by Cys-559 and Cys-568. A run of 2 helical transmembrane segments spans residues 575 to 596 and 643 to 665; these read AFYLAVFWMLNTIGWVTFYWHW and LSVWAWMFLFGHLVWATGFMFLI. Chlorophyll a is bound by residues His-654, Met-662, and Tyr-670. Residue Trp-671 participates in phylloquinone binding. The helical transmembrane segment at 707-727 threads the bilayer; the sequence is LVGLAHFSVGYIFTYAAFLIA.

It belongs to the PsaA/PsaB family. The PsaA/B heterodimer binds the P700 chlorophyll special pair and subsequent electron acceptors. PSI consists of a core antenna complex that captures photons, and an electron transfer chain that converts photonic excitation into a charge separation. The eukaryotic PSI reaction center is composed of at least 11 subunits. P700 is a chlorophyll a/chlorophyll a' dimer, A0 is one or more chlorophyll a, A1 is one or both phylloquinones and FX is a shared 4Fe-4S iron-sulfur center. is required as a cofactor.

Its subcellular location is the plastid. It localises to the chloroplast thylakoid membrane. The enzyme catalyses reduced [plastocyanin] + hnu + oxidized [2Fe-2S]-[ferredoxin] = oxidized [plastocyanin] + reduced [2Fe-2S]-[ferredoxin]. Its function is as follows. PsaA and PsaB bind P700, the primary electron donor of photosystem I (PSI), as well as the electron acceptors A0, A1 and FX. PSI is a plastocyanin-ferredoxin oxidoreductase, converting photonic excitation into a charge separation, which transfers an electron from the donor P700 chlorophyll pair to the spectroscopically characterized acceptors A0, A1, FX, FA and FB in turn. Oxidized P700 is reduced on the lumenal side of the thylakoid membrane by plastocyanin. This chain is Photosystem I P700 chlorophyll a apoprotein A2, found in Solanum tuberosum (Potato).